The chain runs to 216 residues: Thymidylate kinase (216 aa).

10–17 contributes to the ATP binding site; it reads GVDGSGKT.

This sequence belongs to the thymidylate kinase family.

It carries out the reaction dTMP + ATP = dTDP + ADP. In terms of biological role, phosphorylation of dTMP to form dTDP in both de novo and salvage pathways of dTTP synthesis. This Pelotomaculum thermopropionicum (strain DSM 13744 / JCM 10971 / SI) protein is Thymidylate kinase.